The chain runs to 556 residues: 2-succinyl-5-enolpyruvyl-6-hydroxy-3-cyclohexene-1-carboxylate synthase (556 aa).

It belongs to the TPP enzyme family. MenD subfamily. Homodimer. The cofactor is Mg(2+). Mn(2+) is required as a cofactor. Requires thiamine diphosphate as cofactor.

The catalysed reaction is isochorismate + 2-oxoglutarate + H(+) = 5-enolpyruvoyl-6-hydroxy-2-succinyl-cyclohex-3-ene-1-carboxylate + CO2. It functions in the pathway quinol/quinone metabolism; 1,4-dihydroxy-2-naphthoate biosynthesis; 1,4-dihydroxy-2-naphthoate from chorismate: step 2/7. It participates in quinol/quinone metabolism; menaquinone biosynthesis. Catalyzes the thiamine diphosphate-dependent decarboxylation of 2-oxoglutarate and the subsequent addition of the resulting succinic semialdehyde-thiamine pyrophosphate anion to isochorismate to yield 2-succinyl-5-enolpyruvyl-6-hydroxy-3-cyclohexene-1-carboxylate (SEPHCHC). This Saccharopolyspora erythraea (strain ATCC 11635 / DSM 40517 / JCM 4748 / NBRC 13426 / NCIMB 8594 / NRRL 2338) protein is 2-succinyl-5-enolpyruvyl-6-hydroxy-3-cyclohexene-1-carboxylate synthase.